The following is a 478-amino-acid chain: Dihydrolipoyl dehydrogenase (478 aa).

FAD contacts are provided by residues 34 to 49, lysine 58, and glycine 122; that span reads EKYI…GGTC. A disulfide bond links cysteine 49 and cysteine 54. Residues 188–192, glutamate 211, valine 245, and 276–279 contribute to the NAD(+) site; these read GAGVI and AVGR. FAD is bound by residues aspartate 319 and alanine 327. The Proton acceptor role is filled by histidine 451.

This sequence belongs to the class-I pyridine nucleotide-disulfide oxidoreductase family. In terms of assembly, homodimer. The cofactor is FAD.

The protein localises to the cytoplasm. It carries out the reaction N(6)-[(R)-dihydrolipoyl]-L-lysyl-[protein] + NAD(+) = N(6)-[(R)-lipoyl]-L-lysyl-[protein] + NADH + H(+). Its function is as follows. The branched-chain alpha-keto dehydrogenase complex catalyzes the overall conversion of alpha-keto acids to acyl-CoA and CO(2). It contains multiple copies of 3 enzymatic components: branched-chain alpha-keto acid decarboxylase (E1), lipoamide acyltransferase (E2) and lipoamide dehydrogenase (E3). Functionally, also acts in the glycine cleavage system. In Pseudomonas aeruginosa (strain ATCC 15692 / DSM 22644 / CIP 104116 / JCM 14847 / LMG 12228 / 1C / PRS 101 / PAO1), this protein is Dihydrolipoyl dehydrogenase (lpdG).